Consider the following 277-residue polypeptide: F-actin-capping protein subunit beta isoforms 1 and 2 (277 aa).

S2 is modified (N-acetylserine).

It belongs to the F-actin-capping protein beta subunit family. Component of the F-actin capping complex, composed of a heterodimer of an alpha and a beta subunit. Component of the WASH complex. In terms of assembly, component of the F-actin capping complex, composed of a heterodimer of an alpha and a beta subunit. Subunit of dynactin, a multiprotein complex part of a tripartite complex with dynein and a adapter, such as BICDL1, BICD2 or HOOK3. The dynactin complex is built around ACTR1A/ACTB filament and consists of an actin-related filament composed of a shoulder domain, a pointed end and a barbed end. Its length is defined by its flexible shoulder domain. As to expression, isoform 1 is detected in pectoral muscle, cardiac muscle and gizzard. Isoform 2 is detected in brain and liver (at protein level). Isoform 2 is the predominant isoform of nonmuscle tissues and isoform 1 is the predominant isoform of muscle tissues.

Its subcellular location is the cytoplasm. The protein resides in the myofibril. It is found in the sarcomere. It localises to the z line. The protein localises to the i band. Its subcellular location is the cytoskeleton. In terms of biological role, F-actin-capping proteins bind in a Ca(2+)-independent manner to the fast growing ends of actin filaments (barbed end) thereby blocking the exchange of subunits at these ends. Unlike other capping proteins (such as gelsolin and severin), these proteins do not sever actin filaments. May play a role in the regulation of cell morphology and cytoskeletal organization. Forms, with CAPZB, the barbed end of the fast growing ends of actin filaments in the dynactin complex and stabilizes dynactin structure. The dynactin multiprotein complex activates the molecular motor dynein for ultra-processive transport along microtubules. The sequence is that of F-actin-capping protein subunit beta isoforms 1 and 2 (CAPZB) from Gallus gallus (Chicken).